The sequence spans 436 residues: ATP-dependent protease ATPase subunit HslU (436 aa).

Residues Ile-19, 61-65 (GVGKT), Asp-249, Glu-314, and Arg-386 contribute to the ATP site.

Belongs to the ClpX chaperone family. HslU subfamily. In terms of assembly, a double ring-shaped homohexamer of HslV is capped on each side by a ring-shaped HslU homohexamer. The assembly of the HslU/HslV complex is dependent on binding of ATP.

Its subcellular location is the cytoplasm. Functionally, ATPase subunit of a proteasome-like degradation complex; this subunit has chaperone activity. The binding of ATP and its subsequent hydrolysis by HslU are essential for unfolding of protein substrates subsequently hydrolyzed by HslV. HslU recognizes the N-terminal part of its protein substrates and unfolds these before they are guided to HslV for hydrolysis. This chain is ATP-dependent protease ATPase subunit HslU, found in Bartonella henselae (strain ATCC 49882 / DSM 28221 / CCUG 30454 / Houston 1) (Rochalimaea henselae).